The following is an 891-amino-acid chain: MATTAAGRLFSLELLVDWVRLETGLSPCAASPAVAFRLLDFPPLLVFPPAAPGPEPQRGAISFGRGKACLLRLHPAALRRPRLRAALLQLPVGPTSAPGLVGACDILLVPSLGQRGVFALRGPEAERVGELALFYRLTELGRFSPGVPQLRGPLSPACILDSEALEVSEPRTEETSKPCTKGISARCLQCVSNARLLEGSEPCAKDTNSWSAGDSDASVVQKSWEEAVLHSKASSGDMASAPCSPAPSGKTVSSVSQDVTELDFETNTFCPPPLYYTHLTQEKTPSARVEITIEPQRNEPEDLDDIFPETKLVSPPLRPVKHTRAAVQESPPVLPNLPQTQGPGEANEAPCPPQIEQSPVNAIRQLPLLNALLIELSLLCNQPVASPTQVHPHLAWLYRGEDKGPDPSTKSTSPSESKSNKLSVRENEKLVNPQSKKNPKGKHPKIGGSPPPKVTKGRLLYGLTNTLRLRLQQTNPNMLVVHEKREQYRRSQIQAVGPKLRIPSWKGKVSSSAAESQMSPQLPADTPTDSNGKLPSLAVQSQLPPQLPGDESLDSIGSFEEGSDTSMQIRAGFDESSTTKEVKQSHAMKQEMVDQSENRTIVTALRAPVSPAGSVTPERSLRSNSFGGNWKNKVPSPGLSLQEPTVDKTVDEGKDGRQVKAISAADTSENRPTSRKSSCESISELLYRDGFTSPCYSEDFCTTENNSRSLPAPDSSTGVEHVQKGSRASKSSEARLSTRKNSSDSSSVLTPPFSAGSPVCSHKRSRALKIHDSLEEASSLSTSDFSSQWTNEKENQADPGSSKVMRKGRDSSTKLKVRAGHKSSEKSQSPRTSQVSSYEPSNLSELELKAIDDSDLADFQEEEDGLGSLRISRQCKDICELVINKLPGYTV.

Disordered regions lie at residues 325-355 (AAVQ…PPQI), 401-457 (EDKG…VTKG), 504-679 (SWKG…KSSC), and 702-844 (TTEN…SNLS). The segment covering 407-417 (PSTKSTSPSES) has biased composition (low complexity). 2 stretches are compositionally biased toward polar residues: residues 509 to 520 (VSSSAAESQMSP) and 527 to 544 (PTDS…SQLP). 2 stretches are compositionally biased toward basic and acidic residues: residues 577-592 (STTK…KQEM) and 645-658 (TVDK…DGRQ). Polar residues-rich tracts occupy residues 665 to 679 (ADTS…KSSC), 702 to 718 (TTEN…SSTG), 726 to 749 (SRAS…SSVL), 776 to 790 (EASS…SQWT), and 826 to 844 (KSQS…SNLS).

In terms of assembly, interacts (via middle region) with microtubules.

It is found in the cytoplasm. It localises to the cytoskeleton. Its subcellular location is the spindle pole. The protein resides in the microtubule organizing center. The protein localises to the centrosome. It is found in the midbody. Microtubule-associated protein (MAP) that plays a role in the regulation of cell division; promotes microtubule stability and participates in the organization of the spindle midzone and normal progress of cytokinesis. The sequence is that of Microtubule-associated protein 10 (Map10) from Mus musculus (Mouse).